Consider the following 273-residue polypeptide: 3-methyl-2-oxobutanoate hydroxymethyltransferase (273 aa).

Mg(2+) contacts are provided by aspartate 53 and aspartate 92. 3-methyl-2-oxobutanoate is bound by residues 53-54 (DS), aspartate 92, and lysine 122. Glutamate 124 contributes to the Mg(2+) binding site. Glutamate 191 serves as the catalytic Proton acceptor.

Belongs to the PanB family. As to quaternary structure, homodecamer; pentamer of dimers. The cofactor is Mg(2+).

The protein resides in the cytoplasm. The enzyme catalyses 3-methyl-2-oxobutanoate + (6R)-5,10-methylene-5,6,7,8-tetrahydrofolate + H2O = 2-dehydropantoate + (6S)-5,6,7,8-tetrahydrofolate. It participates in cofactor biosynthesis; (R)-pantothenate biosynthesis; (R)-pantoate from 3-methyl-2-oxobutanoate: step 1/2. Catalyzes the reversible reaction in which hydroxymethyl group from 5,10-methylenetetrahydrofolate is transferred onto alpha-ketoisovalerate to form ketopantoate. In Bacteroides thetaiotaomicron (strain ATCC 29148 / DSM 2079 / JCM 5827 / CCUG 10774 / NCTC 10582 / VPI-5482 / E50), this protein is 3-methyl-2-oxobutanoate hydroxymethyltransferase.